A 270-amino-acid chain; its full sequence is UPF0162 protein VC_2176 (270 aa).

Belongs to the UPF0162 family.

This Vibrio cholerae serotype O1 (strain ATCC 39315 / El Tor Inaba N16961) protein is UPF0162 protein VC_2176.